We begin with the raw amino-acid sequence, 222 residues long: MGSGSRERIVEVFDALDAELDRLDEVSFEVLTTPERLRSLERLECLVRRLPAVGHALINQLDAQASEEELGGTLCCALANRLRITKPDAALRIADAADLGPRRALTGEPLAPQLTATATAQRQGLIGEAHVKVIRALFRPPARRGGCVHPPGRRSRPGRQSRSISSRRAGPLRPAGHGLATPRRRPHRHRTRPQTRHHPEQPALRRYVTAKWLPDPPSAGHL.

A disordered region spans residues 142-222 (ARRGGCVHPP…LPDPPSAGHL (81 aa)). Residues 160 to 169 (QSRSISSRRA) show a composition bias toward low complexity. A compositionally biased stretch (basic residues) spans 182–196 (PRRRPHRHRTRPQTR).

The protein belongs to the Rv1128c/1148c/1588c/1702c/1945/3466 family.

This is an uncharacterized protein from Mycobacterium tuberculosis (strain CDC 1551 / Oshkosh).